Consider the following 150-residue polypeptide: Deoxyuridine 5'-triphosphate nucleotidohydrolase (150 aa).

Residues 65 to 67 (RSG), N78, and 82 to 84 (TID) each bind substrate. The interval 130-150 (LSDTERGEGGFGHTGVASKAE) is disordered.

Belongs to the dUTPase family. Mg(2+) serves as cofactor.

It carries out the reaction dUTP + H2O = dUMP + diphosphate + H(+). Its pathway is pyrimidine metabolism; dUMP biosynthesis; dUMP from dCTP (dUTP route): step 2/2. This enzyme is involved in nucleotide metabolism: it produces dUMP, the immediate precursor of thymidine nucleotides and it decreases the intracellular concentration of dUTP so that uracil cannot be incorporated into DNA. The sequence is that of Deoxyuridine 5'-triphosphate nucleotidohydrolase from Chlorobaculum parvum (strain DSM 263 / NCIMB 8327) (Chlorobium vibrioforme subsp. thiosulfatophilum).